The chain runs to 130 residues: Putative pre-16S rRNA nuclease (130 aa).

This sequence belongs to the YqgF nuclease family.

Its subcellular location is the cytoplasm. Functionally, could be a nuclease involved in processing of the 5'-end of pre-16S rRNA. The sequence is that of Putative pre-16S rRNA nuclease from Buchnera aphidicola subsp. Cinara cedri (strain Cc).